Here is a 132-residue protein sequence, read N- to C-terminus: Large-conductance mechanosensitive channel (132 aa).

3 consecutive transmembrane segments (helical) span residues 8-28 (FALK…GAFG), 30-50 (IVSS…LGGV), and 67-87 (GAFI…FLFI).

It belongs to the MscL family. In terms of assembly, homopentamer.

It localises to the cell membrane. Functionally, channel that opens in response to stretch forces in the membrane lipid bilayer. May participate in the regulation of osmotic pressure changes within the cell. This Bacillus cytotoxicus (strain DSM 22905 / CIP 110041 / 391-98 / NVH 391-98) protein is Large-conductance mechanosensitive channel.